We begin with the raw amino-acid sequence, 365 residues long: DNA replication and repair protein RecF (365 aa).

An ATP-binding site is contributed by 30–37 (GQNGSGKT).

Belongs to the RecF family.

The protein resides in the cytoplasm. Functionally, the RecF protein is involved in DNA metabolism; it is required for DNA replication and normal SOS inducibility. RecF binds preferentially to single-stranded, linear DNA. It also seems to bind ATP. This Shewanella halifaxensis (strain HAW-EB4) protein is DNA replication and repair protein RecF.